A 207-amino-acid polypeptide reads, in one-letter code: Large ribosomal subunit protein uL4 (207 aa).

Positions 56-76 are disordered; sequence EVRGGGRKPWRQKGTGRARAG. The span at 60–71 shows a compositional bias: basic residues; the sequence is GGRKPWRQKGTG.

It belongs to the universal ribosomal protein uL4 family. Part of the 50S ribosomal subunit.

In terms of biological role, one of the primary rRNA binding proteins, this protein initially binds near the 5'-end of the 23S rRNA. It is important during the early stages of 50S assembly. It makes multiple contacts with different domains of the 23S rRNA in the assembled 50S subunit and ribosome. Functionally, forms part of the polypeptide exit tunnel. The sequence is that of Large ribosomal subunit protein uL4 from Desulfitobacterium hafniense (strain DSM 10664 / DCB-2).